A 128-amino-acid chain; its full sequence is Orchestin (128 aa).

The first 20 residues, 1–20 (MNKVFIIGVCLFIVSQAVLA), serve as a signal peptide directing secretion. Residues 23–95 (WDSDESSDER…DEDSDDSQES (73 aa)) are disordered. 2 stretches are compositionally biased toward basic and acidic residues: residues 30 to 49 (DERL…KLVV) and 56 to 81 (EDSN…RKLS). Acidic residues predominate over residues 84 to 93 (TSDEDSDDSQ).

In terms of processing, phosphorylated on Ser and Tyr residues. Calcium-binding activity is dependent on serine phosphorylation but not on tyrosine phosphorylation. In terms of tissue distribution, posterior caeca epithelium of the gut.

The protein localises to the secreted. Plays a role in cuticle calcification. May induce precipitation of the calcium stored in the posterior caeca as calcium carbonate. The sequence is that of Orchestin from Cryptorchestia cavimana (Amphipod).